A 101-amino-acid chain; its full sequence is RNA-binding protein Hfq (101 aa).

A Sm domain is found at 9 to 68; the sequence is DPYLNALRRERIPVSIYLVNGIKLQGQIESFDQFIILLKNTVSQMVYKHAISTVVPARSI. Residues 68 to 91 form a disordered region; sequence ISHNNNGSSQAQAPQQAVQTTQPV. Positions 77–91 are enriched in low complexity; that stretch reads QAQAPQQAVQTTQPV.

This sequence belongs to the Hfq family. Homohexamer.

Functionally, RNA chaperone that binds small regulatory RNA (sRNAs) and mRNAs to facilitate mRNA translational regulation in response to envelope stress, environmental stress and changes in metabolite concentrations. Also binds with high specificity to tRNAs. The chain is RNA-binding protein Hfq from Haemophilus ducreyi (strain 35000HP / ATCC 700724).